Reading from the N-terminus, the 563-residue chain is MAFNFNWSPLTADAEFYQRAQEMLTAALNKSPKPPIIKDDILVNELNLGSVPPDLEILEIGDLAEDRFRGIFKMCYSGDAFLTLKTRVQANPLNNHLFSKPSFTSPQPLAADAGLTIPLQITLSDIKLSAFIIVVFSKSKGLTLVFRNDPLESLKVSSTFDSIPFIKDYLQKEIEQQLRTLMMDELPAIIHRLSLRLWCPEYRAKEDQEMAEAAKKTKDEVAVDPFASPPQDAVDARGNVLDATEISNLSLDGGSEIHSLFSQKNLLRLAALTNSHRTLSLFTPSIRDAVFRAWAPSERGDSAGTTTPATPSLQRPQSSLGSQSTTYTFSNRSSDDGHGGIPSRPSLVNMNSATTGLSLGANRGSRSHPTRKKKNRVVNLRKPKTTESSESGESETASTTAVSEPTVPSRIPEEPEDLPVTPPSGKVRFNSIDLGDSPKKLPPSRSMTPEQVKMDQIPSLTVQPSTPINTQEQKRPAYNQSASTSYTPEKSAITPPHTPFSYPHGLHFSTTESPSGILEQAWIMKMASELARRQHDDKTARQGFWSTSSNGDDAPPAYEPKAL.

An SMP-LTD domain is found at 1–195 (MAFNFNWSPL…LPAIIHRLSL (195 aa)). Disordered regions lie at residues 298 to 499 (ERGD…PHTP) and 531 to 563 (ARRQ…PKAL). 2 stretches are compositionally biased toward polar residues: residues 303–332 (AGTT…FSNR) and 346–357 (SLVNMNSATTGL). The span at 365–383 (SRSHPTRKKKNRVVNLRKP) shows a compositional bias: basic residues. Positions 386-407 (TESSESGESETASTTAVSEPTV) are enriched in low complexity. Composition is skewed to polar residues over residues 458-471 (PSLT…INTQ) and 478-488 (YNQSASTSYTP). Positions 531-540 (ARRQHDDKTA) are enriched in basic and acidic residues.

The protein belongs to the MDM34 family. As to quaternary structure, component of the ER-mitochondria encounter structure (ERMES) or MDM complex, composed of MMM1, MDM10, MDM12 and MDM34.

Its subcellular location is the mitochondrion outer membrane. Functionally, component of the ERMES/MDM complex, which serves as a molecular tether to connect the endoplasmic reticulum (ER) and mitochondria. Components of this complex are involved in the control of mitochondrial shape and protein biogenesis, and function in nonvesicular lipid trafficking between the ER and mitochondria. MDM34 is required for the interaction of the ER-resident membrane protein MMM1 and the outer mitochondrial membrane-resident beta-barrel protein MDM10. The polypeptide is Mitochondrial distribution and morphology protein 34 (Botryotinia fuckeliana (strain B05.10) (Noble rot fungus)).